The primary structure comprises 175 residues: MMTYVVFILSIVFVIGLIGSPSKPSPIYGGLGLIVSGGAGCGMVLNFGGSFLGLMVFLVYLGGMLVVFGYTTAMATEQYPEVWVSNKVVLGAFLLGLMMEFLAVLYVLKEGEVELVFKFSGLGDWVVYGMSDFGVFSGEAMGVAALYSYGVWLVVVTGWSLFVGVVVIMEVTRGG.

The next 6 helical transmembrane spans lie at 1–21 (MMTY…IGSP), 25–45 (SPIY…GMVL), 47–67 (FGGS…MLVV), 88–108 (VVLG…LYVL), 115–137 (LVFK…GVFS), and 149–169 (YGVW…VVIM).

It belongs to the complex I subunit 6 family. As to quaternary structure, core subunit of respiratory chain NADH dehydrogenase (Complex I) which is composed of 45 different subunits.

It localises to the mitochondrion inner membrane. The catalysed reaction is a ubiquinone + NADH + 5 H(+)(in) = a ubiquinol + NAD(+) + 4 H(+)(out). Core subunit of the mitochondrial membrane respiratory chain NADH dehydrogenase (Complex I) which catalyzes electron transfer from NADH through the respiratory chain, using ubiquinone as an electron acceptor. Essential for the catalytic activity and assembly of complex I. The chain is NADH-ubiquinone oxidoreductase chain 6 (MT-ND6) from Hippopotamus amphibius (Hippopotamus).